Here is a 798-residue protein sequence, read N- to C-terminus: MDASGAATMAVLSSLLVFLALSSSLCSAGTLNARPAFPVQSGEIQPSGQNSKQAARRVMHPSFANAGRTPGLEIWRIENFEPVIYPKTNYGKFYTGDSFIVLNTIENKKDKKLSWDVHFWLGLETSTDEAGAAAILTVQLDDLLNGGPVQHREVQDHESQLFLSYFKNGIRYEQGGVGTGFKHVETNAQGETRLFQVKGKRNVRVRQVNLSVSSMNTGDCFILDAGSDIYVYVGSQAKRVEKLKAISAANQIRDQDHNGRARVQIVDDFSTDADKQHFFDVLGSGSADQVPDESTADEDSAFERTDAAAVSLYKVSDASGKLKVDIIGQKPLTQAMLDTRECFILDTGSGIFVWVGKGATQKEKTDAMAKAQEFLRTKKYPAWTQIHRIVEGSESAPFKQYFDTWRDAGMSHSRLIRSALGIGSDELLNDDEIDSVVTQLKKSGGRAFGFMPDHGQNVIETITQYVAKPGSDEIVVSTVPFDEKLPLLGFASYVLTYNYEANNGDTGSLTYVWHGVKASAAARKRAFEEGLVGSKDGLLVQTNQGHEPRHFYKIFKGKLLTSFTALPVTAQLFRIRGTVESDVHASEVAADSSSLASSDAFVLHSGKSHKIYIWNGLGASAFEKQAAVDRFSDYWDDVELEQVEEGAEPDEFWEELNGEGQYDRSLGDDGAPLLESRLFHCHLSSGGFLKVEEVAQYEQEDLDSDDIMLLDAGDEIYLWVGYGVSEEENGKLLDTAKLYFNLEPTARSFDTVSIIRVPQGKEPRVFKRMFPNWDDNYWQNQPSYEDMKQLVIDANNEV.

A signal peptide spans 1–28 (MDASGAATMAVLSSLLVFLALSSSLCSA). The actin-severing stretch occupies residues 57-181 (RVMHPSFANA…YEQGGVGTGF (125 aa)). One copy of the Gelsolin-like 1 repeat lies at 78–131 (ENFEPVIYPKTNYGKFYTGDSFIVLNTIENKKDKKLSWDVHFWLGLETSTDEAG). Tyrosine 90 is subject to Phosphotyrosine; by SRC. The segment at 128-131 (DEAG) is actin-actin interfilament contact point. A 1,2-diacyl-sn-glycero-3-phospho-(1D-myo-inositol-4,5-bisphosphate) contacts are provided by residues 167–174 (KNGIRYEQ) and 193–201 (RLFQVKGKR). 4 Gelsolin-like repeats span residues 203–243 (VRVR…VEKL), 322–365 (LKVD…KEKT), 474–524 (IVVS…AARK), and 583–625 (VHAS…FEKQ). An actin-binding, Ca-sensitive region spans residues 451–792 (MPDHGQNVIE…SYEDMKQLVI (342 aa)). Aspartate 599 provides a ligand contact to Ca(2+). Tyrosine 612 carries the phosphotyrosine; by SRC modification. Glutamate 623 lines the Ca(2+) pocket. Tyrosine 662 is subject to Phosphotyrosine; by SRC. The Gelsolin-like 6 repeat unit spans residues 689–730 (LKVEEVAQYEQEDLDSDDIMLLDAGDEIYLWVGYGVSEEENG). Residues aspartate 705, aspartate 706, and glutamate 728 each contribute to the Ca(2+) site.

Belongs to the villin/gelsolin family. As to quaternary structure, binds to actin and to fibronectin. In terms of tissue distribution, isoform 1 and isoform 2 are ubiquitously expressed in early embryo. Isoform 1 is expressed in the fat body, and is abundant in hemolymph. Isoform 2 is expressed in parts of the gut.

The protein resides in the cytoplasm. Its subcellular location is the cytoskeleton. It is found in the secreted. Calcium-regulated, actin-modulating protein that binds to the plus (or barbed) ends of actin monomers or filaments, preventing monomer exchange (end-blocking or capping). It can promote the assembly of monomers into filaments (nucleation) as well as sever filaments already formed. The polypeptide is Gelsolin (Gel) (Drosophila melanogaster (Fruit fly)).